The following is a 285-amino-acid chain: Ribosomal protein L11 methyltransferase (285 aa).

T131, G154, D176, and N223 together coordinate S-adenosyl-L-methionine.

It belongs to the methyltransferase superfamily. PrmA family.

The protein localises to the cytoplasm. The catalysed reaction is L-lysyl-[protein] + 3 S-adenosyl-L-methionine = N(6),N(6),N(6)-trimethyl-L-lysyl-[protein] + 3 S-adenosyl-L-homocysteine + 3 H(+). Its function is as follows. Methylates ribosomal protein L11. The polypeptide is Ribosomal protein L11 methyltransferase (Brucella suis (strain ATCC 23445 / NCTC 10510)).